A 292-amino-acid polypeptide reads, in one-letter code: Protease HtpX homolog (292 aa).

The next 2 helical transmembrane spans lie at 9–29 (TGVL…VLGN) and 31–51 (TGMM…YWYS). Zn(2+) is bound at residue His-133. Glu-134 is an active-site residue. His-137 is a binding site for Zn(2+). The next 2 membrane-spanning stretches (helical) occupy residues 148–168 (LAAV…WMLW) and 185–205 (LGAI…QMAI). Glu-210 serves as a coordination point for Zn(2+).

It belongs to the peptidase M48B family. It depends on Zn(2+) as a cofactor.

The protein localises to the cell membrane. The protein is Protease HtpX homolog of Thermococcus sibiricus (strain DSM 12597 / MM 739).